A 429-amino-acid polypeptide reads, in one-letter code: 3-isopropylmalate dehydratase large subunit (429 aa).

[4Fe-4S] cluster-binding residues include Cys-303, Cys-363, and Cys-366.

This sequence belongs to the aconitase/IPM isomerase family. LeuC type 2 subfamily. In terms of assembly, heterodimer of LeuC and LeuD. It depends on [4Fe-4S] cluster as a cofactor.

It catalyses the reaction (2R,3S)-3-isopropylmalate = (2S)-2-isopropylmalate. It participates in amino-acid biosynthesis; L-leucine biosynthesis; L-leucine from 3-methyl-2-oxobutanoate: step 2/4. Functionally, catalyzes the isomerization between 2-isopropylmalate and 3-isopropylmalate, via the formation of 2-isopropylmaleate. This chain is 3-isopropylmalate dehydratase large subunit, found in Caldicellulosiruptor bescii (strain ATCC BAA-1888 / DSM 6725 / KCTC 15123 / Z-1320) (Anaerocellum thermophilum).